The chain runs to 502 residues: Mannitol 2-dehydrogenase (502 aa).

37-48 is an NAD(+) binding site; that stretch reads IVHIGVGGFHRA.

The protein belongs to the mannitol dehydrogenase family. As to quaternary structure, monomer.

The enzyme catalyses D-mannitol + NAD(+) = D-fructose + NADH + H(+). Functionally, catalyzes the NAD(H)-dependent interconversion of D-fructose and D-mannitol in the mannitol metabolic pathway. This is Mannitol 2-dehydrogenase from Neosartorya fischeri (strain ATCC 1020 / DSM 3700 / CBS 544.65 / FGSC A1164 / JCM 1740 / NRRL 181 / WB 181) (Aspergillus fischerianus).